Consider the following 207-residue polypeptide: Guanylate kinase (207 aa).

The Guanylate kinase-like domain occupies 17–197 (GRLVVLAGPS…SCDELVSLLV (181 aa)). Position 24 to 31 (24 to 31 (GPSAVGKS)) interacts with ATP.

It belongs to the guanylate kinase family.

The protein resides in the cytoplasm. It catalyses the reaction GMP + ATP = GDP + ADP. Functionally, essential for recycling GMP and indirectly, cGMP. The sequence is that of Guanylate kinase from Rhodococcus jostii (strain RHA1).